The sequence spans 199 residues: UPF0301 protein Ajs_3573 (199 aa).

It belongs to the UPF0301 (AlgH) family.

The sequence is that of UPF0301 protein Ajs_3573 from Acidovorax sp. (strain JS42).